The sequence spans 259 residues: Proteasome subunit alpha (259 aa).

It belongs to the peptidase T1A family. In terms of assembly, the 20S proteasome core is composed of 14 alpha and 14 beta subunits that assemble into four stacked heptameric rings, resulting in a barrel-shaped structure. The two inner rings, each composed of seven catalytic beta subunits, are sandwiched by two outer rings, each composed of seven alpha subunits. The catalytic chamber with the active sites is on the inside of the barrel. Has a gated structure, the ends of the cylinder being occluded by the N-termini of the alpha-subunits. Is capped at one or both ends by the proteasome regulatory ATPase, PAN.

The protein localises to the cytoplasm. With respect to regulation, the formation of the proteasomal ATPase PAN-20S proteasome complex, via the docking of the C-termini of PAN into the intersubunit pockets in the alpha-rings, triggers opening of the gate for substrate entry. Interconversion between the open-gate and close-gate conformations leads to a dynamic regulation of the 20S proteasome proteolysis activity. Its function is as follows. Component of the proteasome core, a large protease complex with broad specificity involved in protein degradation. This Methanococcus vannielii (strain ATCC 35089 / DSM 1224 / JCM 13029 / OCM 148 / SB) protein is Proteasome subunit alpha.